The chain runs to 1180 residues: Protocadherin-12 (1180 aa).

A signal peptide spans 1–17; that stretch reads MMLLLPFLLGLLGPGSY. The Extracellular segment spans residues 18–716; sequence LFISGDCQEV…HEPGVLSTPA (699 aa). 5 Cadherin domains span residues 28–135, 136–244, 245–352, 355–460, and 461–565; these read ATVM…QPQF, PKDE…SPVF, AESS…APSI, TWAS…APVF, and EKSR…APEV. N-linked (GlcNAc...) asparagine glycosylation is found at Asn265 and Asn415. N-linked (GlcNAc...) asparagine glycosylation is found at Asn582, Asn659, and Asn662. One can recognise a Cadherin 6 domain in the interval 600–711; that stretch reads PAGTGIPPKA…LRDSAHEPGV (112 aa). Residues 717–737 traverse the membrane as a helical segment; the sequence is LALICLAVLLAIFGLLLALFV. The Cytoplasmic segment spans residues 738-1180; sequence SICRTERKDN…ESRLGCGRNL (443 aa). Disordered regions lie at residues 857–930 and 973–1026; these read NASR…GPHQ and QFQP…PEED. Ser859 is modified (phosphoserine). Residues 904 to 918 are compositionally biased toward polar residues; sequence PASSATLRRQRNFNG. Positions 1014 to 1026 are enriched in acidic residues; that stretch reads PDLEEGPPSPEED. A Phosphoserine modification is found at Ser1064. Residues 1076-1093 show a composition bias toward polar residues; the sequence is SSPDATTSEEPRTFQTFG. Disordered regions lie at residues 1076-1104 and 1156-1180; these read SSPD…ELSP and SGAS…GRNL.

In terms of processing, N-glycosylated. Post-translationally, cleaved by ADAM10 close to the transmembrane domain to release the Protocadherin-12, secreted form in the serum. Cleavage results in reduced cellular adhesion in a cell migration assay. As to expression, expressed in endothelial cells: localizes in vasculogenic rather than angiogenic endothelium. Strongly expressed in a subset of invasive cells of the placenta, named glycogen-rich trophoblasts cells (at protein level). glycogen-rich trophoblasts cells originate from the from the ectoplacental cone where they rapidly form tight islets (at protein level). In adult mice, present at high level in mesangial cells of kidney glomeruli, while expression was not detected in other types of perivascular cells.

The protein resides in the cell membrane. It localises to the cell junction. Its subcellular location is the secreted. Its function is as follows. Cellular adhesion molecule that may play an important role in cell-cell interactions at interendothelial junctions. Acts as a regulator of cell migration, probably via increasing cell-cell adhesion. Promotes homotypic calcium-dependent aggregation and adhesion and clusters at intercellular junctions. Unable to bind to catenins, weakly associates with the cytoskeleton. The protein is Protocadherin-12 of Mus musculus (Mouse).